The chain runs to 336 residues: Lipoyl synthase (336 aa).

7 residues coordinate [4Fe-4S] cluster: C81, C86, C92, C107, C111, C114, and S323. Positions 93–312 constitute a Radical SAM core domain; that stretch reads FGHGTATFMI…EDYGYELGFS (220 aa).

The protein belongs to the radical SAM superfamily. Lipoyl synthase family. [4Fe-4S] cluster serves as cofactor.

Its subcellular location is the cytoplasm. It catalyses the reaction [[Fe-S] cluster scaffold protein carrying a second [4Fe-4S](2+) cluster] + N(6)-octanoyl-L-lysyl-[protein] + 2 oxidized [2Fe-2S]-[ferredoxin] + 2 S-adenosyl-L-methionine + 4 H(+) = [[Fe-S] cluster scaffold protein] + N(6)-[(R)-dihydrolipoyl]-L-lysyl-[protein] + 4 Fe(3+) + 2 hydrogen sulfide + 2 5'-deoxyadenosine + 2 L-methionine + 2 reduced [2Fe-2S]-[ferredoxin]. Its pathway is protein modification; protein lipoylation via endogenous pathway; protein N(6)-(lipoyl)lysine from octanoyl-[acyl-carrier-protein]: step 2/2. Catalyzes the radical-mediated insertion of two sulfur atoms into the C-6 and C-8 positions of the octanoyl moiety bound to the lipoyl domains of lipoate-dependent enzymes, thereby converting the octanoylated domains into lipoylated derivatives. The polypeptide is Lipoyl synthase (Stenotrophomonas maltophilia (strain K279a)).